The following is a 370-amino-acid chain: DNA replication and repair protein RecF (370 aa).

G30–T37 is an ATP binding site.

This sequence belongs to the RecF family.

It localises to the cytoplasm. The RecF protein is involved in DNA metabolism; it is required for DNA replication and normal SOS inducibility. RecF binds preferentially to single-stranded, linear DNA. It also seems to bind ATP. The protein is DNA replication and repair protein RecF of Prosthecochloris aestuarii (strain DSM 271 / SK 413).